The primary structure comprises 341 residues: Phosphoribosylformylglycinamidine cyclo-ligase (341 aa).

It belongs to the AIR synthase family.

Its subcellular location is the cytoplasm. It catalyses the reaction 2-formamido-N(1)-(5-O-phospho-beta-D-ribosyl)acetamidine + ATP = 5-amino-1-(5-phospho-beta-D-ribosyl)imidazole + ADP + phosphate + H(+). It functions in the pathway purine metabolism; IMP biosynthesis via de novo pathway; 5-amino-1-(5-phospho-D-ribosyl)imidazole from N(2)-formyl-N(1)-(5-phospho-D-ribosyl)glycinamide: step 2/2. In Agathobacter rectalis (strain ATCC 33656 / DSM 3377 / JCM 17463 / KCTC 5835 / VPI 0990) (Eubacterium rectale), this protein is Phosphoribosylformylglycinamidine cyclo-ligase.